Consider the following 267-residue polypeptide: MKAAVLTLAVLFLTGSQARHFWQQDEPPQSPWDRVKDLATVYVDVLKDSGRDYVSQFEGSTLGKQLNLKLLDNWDSVTSTFSKLREQLGPVTQEFWDNLEKETEGLRQEMSKDLEEVKAKVQPYLDDFQKKWQEEMELYRQKVEPLRAELQEGARQKLHELQEKLSPLGEEMRDRARAHVDALRTHLAPYSDELRQRLAARLEALKENGGARLAEYHAKATEHLSTLSEKAKPALEDLRQGLLPVLESFKVSFLSALEEYTKKLNTQ.

The N-terminal stretch at M1–A18 is a signal peptide. Repeat copies occupy residues L68 to G89 and P90 to S111. The tract at residues L68–Q267 is 10 X approximate tandem repeats. M110 carries the post-translational modification Methionine sulfoxide. Residues K112–Q122 form a 3; half-length repeat. 5 consecutive repeat copies span residues P123–E144, P145–S166, P167–A188, P189–G210, and A211–K232. Residue M136 is modified to Methionine sulfoxide. The stretch at P233–L243 is one 9; half-length repeat. Residues P244–Q267 form repeat 10.

This sequence belongs to the apolipoprotein A1/A4/E family. Homodimer. Interacts with APOA1BP and CLU. Component of a sperm activating protein complex (SPAP), consisting of APOA1, an immunoglobulin heavy chain, an immunoglobulin light chain and albumin. Interacts with NDRG1. Interacts with SCGB3A2. Interacts with NAXE and YJEFN3. Post-translationally, glycosylated. In terms of processing, palmitoylated. Phosphorylation sites are present in the extracellular medium. As to expression, major protein of plasma HDL, also found in chylomicrons.

The protein localises to the secreted. In terms of biological role, participates in the reverse transport of cholesterol from tissues to the liver for excretion by promoting cholesterol efflux from tissues and by acting as a cofactor for the lecithin cholesterol acyltransferase (LCAT). As part of the SPAP complex, activates spermatozoa motility. This Pan paniscus (Pygmy chimpanzee) protein is Apolipoprotein A-I (APOA1).